Reading from the N-terminus, the 331-residue chain is Major ferric iron-binding protein (331 aa).

Positions 1-22 (MKTSIRYALLAAALTAATPALA) are cleaved as a signal peptide. Residues histidine 31, glutamate 79, tyrosine 217, and tyrosine 218 each contribute to the Fe cation site.

This sequence belongs to the bacterial solute-binding protein 1 family.

The protein localises to the periplasm. This protein may be a central component in the iron-acquisition system. The polypeptide is Major ferric iron-binding protein (fbpA) (Neisseria meningitidis serogroup A / serotype 4A (strain DSM 15465 / Z2491)).